The following is a 377-amino-acid chain: Geranylgeranyl transferase type-1 subunit beta (377 aa).

PFTB repeat units lie at residues 144 to 186 (KEAC…YMLN), 193 to 234 (MKKA…CLMG), 245 to 284 (LNRI…KLLK), and 291 to 333 (FEKN…SLME). Residues 219–221 (HGG) and 263–266 (RPNK) contribute to the geranylgeranyl diphosphate site. Residues Asp269 and Cys271 each contribute to the Zn(2+) site. 272–275 (YSFW) provides a ligand contact to geranylgeranyl diphosphate. Residue His321 coordinates Zn(2+).

The protein belongs to the protein prenyltransferase subunit beta family. In terms of assembly, heterodimer of FNTA and PGGT1B. PGGT1B mediates interaction with substrate peptides. Zn(2+) serves as cofactor. The cofactor is Mg(2+).

The enzyme catalyses geranylgeranyl diphosphate + L-cysteinyl-[protein] = S-geranylgeranyl-L-cysteinyl-[protein] + diphosphate. Its function is as follows. Catalyzes the transfer of a geranylgeranyl moiety from geranylgeranyl diphosphate to a cysteine at the fourth position from the C-terminus of proteins with the C-terminal sequence Cys-aliphatic-aliphatic-X. Known substrates include RAC1, RAC2, RAP1A and RAP1B. This is Geranylgeranyl transferase type-1 subunit beta (Pggt1b) from Rattus norvegicus (Rat).